Reading from the N-terminus, the 670-residue chain is uncharacterized protein (670 aa).

The interval Pro53–Pro83 is disordered. A run of 27 repeats spans residues Ala143 to Thr158, Ala171 to Thr186, Ala200 to Pro214, Ala215 to Pro233, Ala234 to Pro252, Ala253 to Thr268, Thr279 to Pro293, Ala294 to Thr309, Thr320 to Pro334, Ala335 to Pro349, Ala362 to Pro376, Ala377 to Pro391, Ala392 to Pro406, Ala407 to Pro421, Ala422 to Pro436, Ala437 to Thr452, Val464 to Thr477, Ala478 to Thr493, Ala504 to Thr517, Ala518 to Thr531, Ala532 to Thr545, Ala546 to Thr559, Ala560 to Thr573, Ala574 to Thr587, Ala588 to Thr601, Ala602 to Thr615, and Ala616 to Thr629. Residues Pro187–Asn225 form a disordered region. Positions Ala205–Asn225 are enriched in low complexity. The segment at Gly339–Thr395 is disordered. Residues Asp342–Ala362 show a composition bias toward polar residues. A compositionally biased stretch (low complexity) spans Met363–Thr395. 2 stretches are compositionally biased toward low complexity: residues Gly471–Gly482 and Thr490–Thr503. The tract at residues Gly471–Thr503 is disordered. A compositionally biased stretch (low complexity) spans Gly525 to Gly634. The segment at Gly525 to Arg670 is disordered. Basic residues predominate over residues Gly638–Gly654.

This is an uncharacterized protein from Ictalurid herpesvirus 1 (strain Auburn) (IcHV-1).